The following is a 121-amino-acid chain: Large ribosomal subunit protein uL18 (121 aa).

It belongs to the universal ribosomal protein uL18 family. In terms of assembly, part of the 50S ribosomal subunit; part of the 5S rRNA/L5/L18/L25 subcomplex. Contacts the 5S and 23S rRNAs.

Its function is as follows. This is one of the proteins that bind and probably mediate the attachment of the 5S RNA into the large ribosomal subunit, where it forms part of the central protuberance. In Leptothrix cholodnii (strain ATCC 51168 / LMG 8142 / SP-6) (Leptothrix discophora (strain SP-6)), this protein is Large ribosomal subunit protein uL18.